Reading from the N-terminus, the 396-residue chain is Probable isocitrate dehydrogenase [NAD] gamma 2, mitochondrial (396 aa).

The transit peptide at 1-25 directs the protein to the mitochondrion; it reads MLAVTSCSMKTVLQYAVFLGHSREV. Residue threonine 117 coordinates citrate. Residues arginine 133, arginine 164, and aspartate 251 each coordinate substrate. Aspartate 251 contacts Mn(2+). Residue asparagine 321 coordinates ADP.

This sequence belongs to the isocitrate and isopropylmalate dehydrogenases family. In terms of assembly, heterooligomer of subunits alpha (IDH3A), beta (IDH3B), and gamma (IDH3G) in the apparent ratio of 2:1:1. The heterodimer containing one IDH3A and one IDH3B subunit and the heterodimer containing one IDH3A and one IDH3G subunit assemble into a heterotetramer (which contains two subunits of IDH3A, one of IDH3B and one of IDH3G) and further into the heterooctamer. The cofactor is Mg(2+). Mn(2+) is required as a cofactor.

The protein resides in the mitochondrion. Its activity is regulated as follows. The heterotetramer and the heterodimer composed of IDH3A and IDH3G subunits can be allosterically activated by citrate (CIT) or/and ADP, and the two activators can act independently or synergistically. The heterodimer composed of IDH3A and IDH3B subunits cannot be allosterically regulated and the allosteric regulation of the heterotetramer is through the IDH3G subunit and not the IDH3B subunit. The IDH3G subunit contains the allosteric site which consists of a CIT-binding site and an ADP-binding site, and the binding of CIT and ADP causes conformational changes at the allosteric site which are transmitted to the active site in the catalytic subunit (IDH3A) through a cascade of conformational changes at the heterodimer interface, leading to stabilization of the isocitrate-binding at the active site and thus activation of the enzyme. ATP can activate the heterotetramer and the heterodimer composed of IDH3A and IDH3G subunits at low concentrations but inhibits their activities at high concentrations, whereas ATP exhibits only inhibitory effect on the heterodimer composed of IDH3A and IDH3B subunits. Functionally, regulatory subunit which plays a role in the allosteric regulation of the enzyme catalyzing the decarboxylation of isocitrate (ICT) into alpha-ketoglutarate. The heterodimer composed of the alpha (IDH3A) and beta (IDH3B) subunits and the heterodimer composed of the alpha (IDH3A) and gamma (IDH3G) subunits, have considerable basal activity but the full activity of the heterotetramer (containing two subunits of IDH3A, one of IDH3B and one of IDH3G) requires the assembly and cooperative function of both heterodimers. The polypeptide is Probable isocitrate dehydrogenase [NAD] gamma 2, mitochondrial (Mus musculus (Mouse)).